The primary structure comprises 382 residues: Mannitol-1-phosphate 5-dehydrogenase (382 aa).

3–14 serves as a coordination point for NAD(+); that stretch reads ALHFGAGNIGRG. Lys-269 bears the N6-acetyllysine mark.

This sequence belongs to the mannitol dehydrogenase family.

The enzyme catalyses D-mannitol 1-phosphate + NAD(+) = beta-D-fructose 6-phosphate + NADH + H(+). This Shigella boydii serotype 18 (strain CDC 3083-94 / BS512) protein is Mannitol-1-phosphate 5-dehydrogenase.